Consider the following 493-residue polypeptide: Glutamyl-tRNA(Gln) amidotransferase subunit A (493 aa).

Active-site charge relay system residues include Lys79 and Ser159. Catalysis depends on Ser183, which acts as the Acyl-ester intermediate.

It belongs to the amidase family. GatA subfamily. In terms of assembly, heterotrimer of A, B and C subunits.

The enzyme catalyses L-glutamyl-tRNA(Gln) + L-glutamine + ATP + H2O = L-glutaminyl-tRNA(Gln) + L-glutamate + ADP + phosphate + H(+). Functionally, allows the formation of correctly charged Gln-tRNA(Gln) through the transamidation of misacylated Glu-tRNA(Gln) in organisms which lack glutaminyl-tRNA synthetase. The reaction takes place in the presence of glutamine and ATP through an activated gamma-phospho-Glu-tRNA(Gln). In Sinorhizobium medicae (strain WSM419) (Ensifer medicae), this protein is Glutamyl-tRNA(Gln) amidotransferase subunit A.